The primary structure comprises 490 residues: Betaine aldehyde dehydrogenase (490 aa).

K(+) is bound by residues Ser-26, Ile-27, and Asp-93. An NAD(+)-binding site is contributed by 150–152 (GAW). The active-site Charge relay system is Lys-162. An NAD(+)-binding site is contributed by 176–179 (KPSE). Residue Val-180 participates in K(+) binding. 230 to 233 (GVAT) lines the NAD(+) pocket. Residue Leu-246 participates in K(+) binding. Catalysis depends on Glu-252, which acts as the Proton acceptor. Gly-254, Cys-286, and Glu-387 together coordinate NAD(+). Residue Cys-286 is the Nucleophile of the active site. Position 286 is a cysteine sulfenic acid (-SOH) (Cys-286). Residues Lys-457 and Gly-460 each coordinate K(+). Residue Glu-464 is the Charge relay system of the active site.

This sequence belongs to the aldehyde dehydrogenase family. Dimer of dimers. The cofactor is K(+).

It catalyses the reaction betaine aldehyde + NAD(+) + H2O = glycine betaine + NADH + 2 H(+). It participates in amine and polyamine biosynthesis; betaine biosynthesis via choline pathway; betaine from betaine aldehyde: step 1/1. Functionally, involved in the biosynthesis of the osmoprotectant glycine betaine. Catalyzes the irreversible oxidation of betaine aldehyde to the corresponding acid. In Stutzerimonas stutzeri (strain A1501) (Pseudomonas stutzeri), this protein is Betaine aldehyde dehydrogenase.